The following is a 307-amino-acid chain: tRNA dimethylallyltransferase (307 aa).

G9 to T16 is a binding site for ATP. A substrate-binding site is contributed by T11 to T16. Interaction with substrate tRNA stretches follow at residues D34–Q37 and Q164–R168.

Belongs to the IPP transferase family. As to quaternary structure, monomer. Requires Mg(2+) as cofactor.

It catalyses the reaction adenosine(37) in tRNA + dimethylallyl diphosphate = N(6)-dimethylallyladenosine(37) in tRNA + diphosphate. Functionally, catalyzes the transfer of a dimethylallyl group onto the adenine at position 37 in tRNAs that read codons beginning with uridine, leading to the formation of N6-(dimethylallyl)adenosine (i(6)A). The sequence is that of tRNA dimethylallyltransferase from Flavobacterium psychrophilum (strain ATCC 49511 / DSM 21280 / CIP 103535 / JIP02/86).